A 464-amino-acid chain; its full sequence is V-type ATP synthase beta chain (464 aa).

Belongs to the ATPase alpha/beta chains family.

Produces ATP from ADP in the presence of a proton gradient across the membrane. The V-type beta chain is a regulatory subunit. This is V-type ATP synthase beta chain from Streptococcus gordonii (strain Challis / ATCC 35105 / BCRC 15272 / CH1 / DL1 / V288).